The following is a 269-amino-acid chain: Phosphate import ATP-binding protein PstB 2 (269 aa).

One can recognise an ABC transporter domain in the interval 23-264 (LEVKDLSIYY…PKKQKTEDYI (242 aa)). Residue 55 to 62 (GPSGCGKS) participates in ATP binding.

Belongs to the ABC transporter superfamily. Phosphate importer (TC 3.A.1.7) family. The complex is composed of two ATP-binding proteins (PstB), two transmembrane proteins (PstC and PstA) and a solute-binding protein (PstS).

Its subcellular location is the cell membrane. The catalysed reaction is phosphate(out) + ATP + H2O = ADP + 2 phosphate(in) + H(+). In terms of biological role, part of the ABC transporter complex PstSACB involved in phosphate import. Responsible for energy coupling to the transport system. The polypeptide is Phosphate import ATP-binding protein PstB 2 (Bacillus subtilis (strain 168)).